Consider the following 573-residue polypeptide: Proton-coupled zinc antiporter SLC30A9, mitochondrial (573 aa).

A disordered region spans residues 66-108 (NCSTSGSGKDGSPTRPEEPKTTEKAQAAQPAAKGAGSKPQGLT). Over residues 90–104 (AQAAQPAAKGAGSKP) the composition is skewed to low complexity. The next 5 helical transmembrane spans lie at 244-264 (VVMV…LAWV), 319-339 (GVGI…MGLL), 347-367 (LLWA…TLLV), 397-417 (VVLL…GCMG), and 429-449 (SLGS…LIYT). Residues 467-471 (LTEFL) carry the LXXLL motif motif.

It belongs to the cation diffusion facilitator (CDF) transporter (TC 2.A.4) family. SLC30A subfamily.

The protein localises to the mitochondrion membrane. The protein resides in the nucleus. It is found in the endoplasmic reticulum. The catalysed reaction is Zn(2+)(in) + 2 H(+)(out) = Zn(2+)(out) + 2 H(+)(in). In terms of biological role, mitochondrial proton-coupled zinc ion antiporter mediating the export of zinc from the mitochondria and involved in zinc homeostasis, zinc mobilization as well as mitochondrial morphology and health. In nucleus, may function as a secondary coactivator for nuclear receptors. The polypeptide is Proton-coupled zinc antiporter SLC30A9, mitochondrial (slc30a9) (Danio rerio (Zebrafish)).